The primary structure comprises 103 residues: Co-chaperonin GroES (103 aa).

A disordered region spans residues 31–67 (GGILLPDTAKEKPQVGEVAQVGPGKRNEDGSRQSPEV).

The protein belongs to the GroES chaperonin family. In terms of assembly, heptamer of 7 subunits arranged in a ring. Interacts with the chaperonin GroEL.

It is found in the cytoplasm. Functionally, together with the chaperonin GroEL, plays an essential role in assisting protein folding. The GroEL-GroES system forms a nano-cage that allows encapsulation of the non-native substrate proteins and provides a physical environment optimized to promote and accelerate protein folding. GroES binds to the apical surface of the GroEL ring, thereby capping the opening of the GroEL channel. This Prochlorococcus marinus (strain NATL2A) protein is Co-chaperonin GroES.